Here is a 381-residue protein sequence, read N- to C-terminus: Chaperone protein DnaJ (381 aa).

The region spanning 5–70 (DFYEVLGVGR…QKKAAYDQYG (66 aa)) is the J domain. The CR-type zinc-finger motif lies at 136-214 (GVSKEIEVPT…CHGQGRKQKT (79 aa)). Positions 149, 152, 166, 169, 188, 191, 202, and 205 each coordinate Zn(2+). CXXCXGXG motif repeat units follow at residues 149–156 (CDTCDGSG), 166–173 (CGTCHGHG), 188–195 (CPTCHGKG), and 202–209 (CNECHGQG).

Belongs to the DnaJ family. As to quaternary structure, homodimer. Zn(2+) serves as cofactor.

The protein resides in the cytoplasm. Participates actively in the response to hyperosmotic and heat shock by preventing the aggregation of stress-denatured proteins and by disaggregating proteins, also in an autonomous, DnaK-independent fashion. Unfolded proteins bind initially to DnaJ; upon interaction with the DnaJ-bound protein, DnaK hydrolyzes its bound ATP, resulting in the formation of a stable complex. GrpE releases ADP from DnaK; ATP binding to DnaK triggers the release of the substrate protein, thus completing the reaction cycle. Several rounds of ATP-dependent interactions between DnaJ, DnaK and GrpE are required for fully efficient folding. Also involved, together with DnaK and GrpE, in the DNA replication of plasmids through activation of initiation proteins. This is Chaperone protein DnaJ from Vibrio campbellii (strain ATCC BAA-1116).